The chain runs to 109 residues: Nucleoid-associated protein CC_0268 (109 aa).

Belongs to the YbaB/EbfC family. Homodimer.

It localises to the cytoplasm. The protein resides in the nucleoid. In terms of biological role, binds to DNA and alters its conformation. May be involved in regulation of gene expression, nucleoid organization and DNA protection. This is Nucleoid-associated protein CC_0268 from Caulobacter vibrioides (strain ATCC 19089 / CIP 103742 / CB 15) (Caulobacter crescentus).